Consider the following 79-residue polypeptide: MQFKKQLLVIFFAYFLVVNESEAFFGTLFKLGSKLIPGVMKLFSKKKERSLMKRELKNLYDPYQRSVEMERLLKELPLY.

The N-terminal stretch at 1 to 23 (MQFKKQLLVIFFAYFLVVNESEA) is a signal peptide. The propeptide occupies 50–79 (SLMKRELKNLYDPYQRSVEMERLLKELPLY).

This sequence belongs to the non-disulfide-bridged peptide (NDBP) superfamily. Medium-length antimicrobial peptide (group 3) family. In terms of tissue distribution, expressed by the venom gland.

The protein localises to the secreted. It localises to the target cell membrane. Functionally, antimicrobial peptide. Shows antibacterial activity against all M.massiliense bacterial strains tested. Has antifungal activity against Candida spp. and two Cryptococcus neoformans strains with MICs values ranging from 6.25 to 200 uM. Also shows an inhibitory activity on C.albicans biofilms at high concentrations. Exhibits chemotactic activity for monocytes, neutrophils, and eosinophils. Shows low cytotoxic activity and has weak hemolytic activity on human erythrocytes. In vivo, treatment of infected mice with M.massiliense reduces the bacterial load in the liver, lung, and spleen. May act by disrupting the integrity of the bacterial cell membrane. The protein is Antimicrobial peptide ToAP2 of Tityus obscurus (Amazonian scorpion).